We begin with the raw amino-acid sequence, 664 residues long: Chaperone protein DnaK (664 aa).

Residue T201 is modified to Phosphothreonine; by autocatalysis. Over residues 574-592 (LKEDASTEKIKEASEELSR) the composition is skewed to basic and acidic residues. The tract at residues 574-664 (LKEDASTEKI…DVEIVDKPND (91 aa)) is disordered. Positions 600–617 (AMQSQSASAAPSSAANAQ) are enriched in low complexity. Positions 639-649 (GNSTSASSNNE) are enriched in polar residues.

Belongs to the heat shock protein 70 family.

Acts as a chaperone. This Chlamydia felis (strain Fe/C-56) (Chlamydophila felis) protein is Chaperone protein DnaK.